Consider the following 817-residue polypeptide: U3 small nucleolar RNA-associated protein 13 (817 aa).

WD repeat units lie at residues 59-100, 102-139, 142-187, 191-233, 238-280, 386-425, 432-476, 489-528, 531-572, 573-614, 616-654, and 664-705; these read EDEQ…RSMK, SSPS…ITHS, GHGG…HTLQ, SAVR…KCKL, PVNQ…VLKR, GHED…CKFD, GHSA…ASMD, AHEK…LEAT, NHKR…KTLE, GHTN…KTLD, HNNR…EIEE, and EQEQ…LGES.

In terms of assembly, interacts with snoRNA U3. Interacts with MPP10. Component of the ribosomal small subunit (SSU) processome composed of at least 40 protein subunits and snoRNA U3.

The protein localises to the nucleus. It localises to the nucleolus. Its function is as follows. Involved in nucleolar processing of pre-18S ribosomal RNA. This Saccharomyces cerevisiae (strain ATCC 204508 / S288c) (Baker's yeast) protein is U3 small nucleolar RNA-associated protein 13 (UTP13).